A 1653-amino-acid chain; its full sequence is MTSKKRKTLLDADDDNDNFDEDDSGSDFDDDEDPDQIEVPGGGRDLNTAVTYAQNIRSGVGVAPKGGIPIPISGAKIVVGNNKIKPISLLRINNNNNNIVTSVNNRNNNNIISTNGSSNNNNNSINNNSQIIKTTTVTTTPTTVGATPTVGGVALGGKLTVIPIAGRNVALDNNLSNMPKKLNNMVTAMGSPAARSSGNAGTTGSSQGGAIGSTSSYLNSLTTNELMNLAAYVAAKGSNAPPPPPPSTAANSVRHSPTGGIPNPGGNFFGGSAAASTSASAANFNMAASLLAQMSYAGGASQIRALKVAGNIGGVGNNQKPPPIATTPGSGGPAGGAPGSGVKGNNSMMEAVQKLIAMNPEYLTSGIPNTVFQMFMQSMQRPQATPSPNQPMNPGAMVTSAAAAAAHASAVAYVQQEEDEVDYEEMGVAETYADYWPAKLKLGKKHPDAVVETASLSSVEPCDVYYKLSLPLETINSGHLSALQLESITYASQAHDHLLPDGSRAGFLIGDGAGVGKGRTIAGIIYENYLKGRKKALWISVSNDLKYDAERDLSDIGATRIEVHALNKFKYAKISSDVNNNCKRGVIFSTYSALIGESNNKTGKYRSRFRQLLQWCGEDFEGLIIFDECHKAKNLCPVGSGKPTKTGQTVLELQQKLPKARVVYASATGASEPKNMAYMVRLGLWGQGTAFGNFNDFITAVERRGVGAMEIVAMDMKLRGMYIARQLSFKGVSFKIEEVPLSKEFRKIYDQSVELWVEAMQKFTEAAELIDAESRMKKTMWGQFWSSHQRFFKYLCIAAKVNHAVLVARESIKYGKCVVIGLQSTGEARTLDQLERDDGELTDFVSTAKGVFQSFVERHFPAPDRNRINRILGLYDETPSLSSVADSTSSLSNNSNITTAAGKRKGSNNNDNRSTKIKKKKRSGSWECSDSEDENTDMKRNRKRDGGNSNSDSDEANSDDDLKSDIDDEDEDHDVDSDQRSVASDASSDFNPFFSGSDSDIDPWVNARSKKSKKAQKKSKKKVKKEKTKKEITTSSATDPSGSTAMSATVVAALNAVKNRKSQLSTQDKIQDLLQKKQELKGTVTPVGVNGVKLNYGPPPKDAIERACTMKEELLRKIERLGARLPPNTLDQLIDELGGPDNVAEMTGRRGRVVQTDDGSIQYESRTESDVPLETLNITEKQRFMDGEKDVAIISEAASSGISLQSDRRVFNQRRRVHITLELPWSADRAIQQFGRTHRSNQVNAPEYIFLISDLAGERRFASTVAKRLESLGALTHGDRRATETRDLSQFNIDNKYGRQALETVMRTIMGYESPLVPPPTDYSGEFFKDIAGALVGVGIIVNSESHPGVLSLDKDYNNISKFLNRILGCPVDLQNRLFKYFTDTMTAIIQQAKRGGRFDLGILDLGAAGENVTRVRLIRFVRKHATGVAPTEMHTVRVERGMIWQEAIDKYADLFNENEGFYLSHQLRNQKRTAIMVVILESRNSSSTSSTTDLDSGSKKKKTHSKKEIMCQIYRPNTGLQVRHESLFELEKKYRKVASEEAEPHWTEQYDASVNTCSHAYWNGNCRNVSLGNDCEVGLRQRLYHVLAGSVLSVWGRVEHILNTRSNSKMQVIRMKTTEGEKIVGTLIPKSCFEPLVADLRSDSEKQEEFNY.

Disordered regions lie at residues Met1–Leu46, Gly190–Ile211, Gly237–Gly265, Asn317–Asn345, and Ser883–Ser1043. Acidic residues predominate over residues Asp11–Gln36. Ser24 and Ser26 each carry phosphoserine. The span at Ala194 to Ser205 shows a compositional bias: polar residues. The segment covering Ser256–Gly265 has biased composition (low complexity). A compositionally biased stretch (gly residues) spans Gly329–Val342. Residues Ser883–Ala901 are compositionally biased toward low complexity. A phosphoserine mark is found at Ser929 and Ser931. The span at Ile966 to Val975 shows a compositional bias: acidic residues. Polar residues predominate over residues Arg980–Asp998. The segment covering Arg1008–Lys1027 has biased composition (basic residues). Residues Leu1064 to Leu1125 adopt a coiled-coil conformation.

The protein belongs to the SBNO family. In terms of assembly, interacts with vg for function in the wing disk. Interacts with Su(H) for function in the eye disk. As to expression, at stage 8, when the formation of the midline precursor cells depends on Notch signaling, high level of expression is seen in the midline precursor cells and a lower level in the surrounding epidermal cells. Between stages 11 and 14, expression is uniform throughout the epidermis, and at stage 16, high level of expression is restricted to the central nervous system. Expressed in the larval leg, wing and eye imaginal disks. Expression is over the wing disk and accumulates within the pleural region.

Its subcellular location is the nucleus. In terms of biological role, notch pathway component, may contribute to the specificity between lateral and inductive Notch signaling pathways in the wing disk. Required during many developmental stages including oogenesis, embryogenesis and imaginal development of the eye, wing and leg. Ebi and sno regulate EGFR-dependent Delta transcription in the developing eye, by antagonizing a repressor function of Suppressor of Hairless (Su(H)). They are required in the R-cells for normal cone cell development. The chain is Protein strawberry notch from Drosophila melanogaster (Fruit fly).